A 415-amino-acid chain; its full sequence is All trans-polyprenyl-diphosphate synthase PDSS1 (415 aa).

The segment at 16–35 is disordered; the sequence is PAARSPGPGSPGRAGPLGPS. Isopentenyl diphosphate is bound by residues lysine 134, arginine 137, and histidine 173. Mg(2+) contacts are provided by aspartate 180 and aspartate 184. Arginine 190 contacts isopentenyl diphosphate.

This sequence belongs to the FPP/GGPP synthase family. As to quaternary structure, heterotetramer composed of 2 PDSS1/DPS1 and 2 PDSS2/DLP1 subunits. The cofactor is Mg(2+).

It is found in the mitochondrion. It carries out the reaction 7 isopentenyl diphosphate + (2E,6E)-farnesyl diphosphate = all-trans-decaprenyl diphosphate + 7 diphosphate. It catalyses the reaction 6 isopentenyl diphosphate + (2E,6E)-farnesyl diphosphate = all-trans-nonaprenyl diphosphate + 6 diphosphate. It functions in the pathway cofactor biosynthesis; ubiquinone biosynthesis. Functionally, heterotetrameric enzyme that catalyzes the condensation of farnesyl diphosphate (FPP), which acts as a primer, and isopentenyl diphosphate (IPP) to produce prenyl diphosphates of varying chain lengths and participates in the determination of the side chain of ubiquinone. Supplies nona and decaprenyl diphosphate, the precursors for the side chain of the isoprenoid quinones ubiquinone-9 (Q9)and ubiquinone-10 (Q10) respectively. The enzyme adds isopentenyl diphosphate molecules sequentially to farnesyl diphosphate with trans stereochemistry. This chain is All trans-polyprenyl-diphosphate synthase PDSS1, found in Homo sapiens (Human).